A 1473-amino-acid polypeptide reads, in one-letter code: NACHT, LRR and PYD domains-containing protein 1 (1473 aa).

The Pyrin domain maps to 1–92 (MAGGAWGRLA…CAQAQEGAGH (92 aa)). Positions 90–113 (AGHSPSFPYSPSEPHLGSPSQPTS) are disordered. 3 positions are modified to phosphoserine; by MAPK11 and MAPK14: S93, S99, and S101. S107 is subject to Phosphoserine; by MAPK14. The ZAKalpha motif 1 signature appears at 111–117 (PTSTAVL). T112 is subject to Phosphothreonine; by MAPK11, MAPK14 and MAP3K20. S113 bears the Phosphoserine; by MAP3K20 mark. Residues T114 and T129 each carry the phosphothreonine; by MAP3K20 modification. Residue S132 is modified to Phosphoserine; by MAP3K20. The interval 160-254 (LPSSPDHESP…HTSLQPHHHP (95 aa)) is disordered. Phosphoserine; by MAPK14 is present on S163. Phosphoserine; by MAPK11 and MAPk14 is present on S168. S170 bears the Phosphoserine; by MAPK11 and MAPK14 mark. Positions 170-182 (SQESPNAPTSTAV) are enriched in polar residues. Position 173 is a phosphoserine; by MAPK11 (S173). Residues 177–183 (PTSTAVL) carry the ZAKalpha motif 2 motif. Position 178 is a phosphothreonine; by MAPK11 (T178). S179 carries the post-translational modification Phosphoserine; by MAPK11 and MAP3K20. T180 carries the phosphothreonine; by MAPK11 and MAP3K20 modification. Over residues 218-231 (EIREREREKSEKGR) the composition is skewed to basic and acidic residues. The NACHT domain occupies 328-637 (RIVILQGAAG…EFFAAMSYVL (310 aa)). An ATP-binding site is contributed by 334-341 (GAAGIGKS). LRR repeat units lie at residues 809–830 (NLKELDLSGNSLSHSAVKSLCK), 838–858 (LLETLRLAGCGLTAEDCKDLA), 866–887 (TLTELDLSFNVLTDAGAKHLCQ), 895–915 (KLQRLQLVSCGLTSDCCQDLA), 923–944 (SLKELDLQQNNLDDVGVRLLCE), and 950–973 (ACKLIRLGLDQTTLSDEMRQELRA). The interval 991–1017 (VMTPTEGLDTGEMSNSTSSLKRQRLGS) is disordered. Residues 1079–1212 (FWGPTGPVAT…HHIVLENPSF (134 aa)) are ZU5. Residues 1079-1364 (FWGPTGPVAT…LMPATTLIPP (286 aa)) form the FIIND domain. Residues 1213 to 1364 (SPLGVLLKMI…LMPATTLIPP (152 aa)) are UPA. The region spanning 1374 to 1463 (DAPQLLHFVD…HLIMELWEKG (90 aa)) is the CARD domain.

It belongs to the NLRP family. As to quaternary structure, interacts (via LRR repeats) with BCL2 and BCL2L1 (via the loop between motifs BH4 and BH3); these interactions reduce NLRP1 inflammasome-induced CASP1 activation and IL1B release, possibly by impairing NLRP1 interaction with PYCARD. Interacts with NOD2; this interaction is enhanced in the presence of muramyl dipeptide (MDP) and increases IL1B release. Interacts with EIF2AK2/PKR; this interaction requires EIF2AK2 activity, is accompanied by EIF2AK2 autophosphorylation and promotes inflammasome assembly in response to danger-associated signals. Interacts with MEFV; this interaction targets NLRP1 to degradation by autophagy, hence preventing excessive IL1B- and IL18-mediated inflammation. Binds (via LRR domain) to dsDNA and dsRNA. Interacts with DPP9; leading to inhibit activation of the inflammasome. DPP9 acts via formation of a ternary complex, composed of a DPP9 homodimer, one full-length NLRP1 protein, and one cleaved C-terminus of NLRP1 (NACHT, LRR and PYD domains-containing protein 1, C-terminus). Interacts with DPP8; leading to inhibit activation of the inflammasome, probably via formation of a ternary complex with DPP8. In terms of assembly, interacts with the C-terminal part of NLRP1 (NACHT, LRR and PYD domains-containing protein 1, C-terminus) in absence of pathogens and other damage-associated signals. Interacts with the N-terminal part of NLRP1 (NACHT, LRR and PYD domains-containing protein 1, N-terminus) in absence of pathogens and other damage-associated signals. Homomultimer; forms the NLRP1 inflammasome polymeric complex, a filament composed of homopolymers of this form in response to pathogens and other damage-associated signals. The NLRP1 inflammasome polymeric complex associates with PYCARD/ASC. Interacts (via CARD domain) with PYCARD/ASC (via CARD domain); leading to pro-caspase-1 (proCASP1) recruitment. Pro-caspase-1 (proCASP1) filament formation increases local enzyme concentration, resulting in trans-autocleavage and activation. Active CASP1 then processes IL1B and IL18 precursors, leading to the release of mature cytokines in the extracellular milieu and inflammatory response. As to quaternary structure, (Microbial infection) Interacts with vaccinia virus protein F1. In terms of assembly, (Microbial infection) Interacts with human herpes virus 8/HHV-8 proteins ORF45; relieving autoinhibition of the NLRP1 inflammasome. In terms of processing, autocatalytically cleaved. Autocatalytic cleavage in FIIND region occurs constitutively, prior to activation signals, and is required for inflammasome activity (IL1B release), possibly by facilitating CASP1 binding. Both N- and C-terminal parts remain associated non-covalently. Ubiquitinated by the cullin:ZER1/ZYG11B complex in response to pathogen-associated signals, leading to its degradation by the proteasome and subsequent release of the cleaved C-terminal part of the protein (NACHT, LRR and PYD domains-containing protein 1, C-terminus), which polymerizes and forms the NLRP1 inflammasome. Post-translationally, phosphorylated by MAP3K20 isoform ZAKalpha, MAPK11 and MAPK14 in response to UV-B irradiation and ribosome collisions, promoting activation of the NLRP1 inflammasome and pyroptosis. In terms of processing, (Microbial infection) Cleaved between Gln-130 and Gly-131 by the Protease 3C from various human enteroviruses and rhinoviruses (EV68, EV71, Coxsackievirus B3, HRV-14 and HRV-16). This cleavage triggers N-glycine-mediated proteasomal degradation of the autoinhibitory NLRP1 N-terminal fragment via the cullin:ZER1/ZYG11B complex which liberates the activating C-terminal fragment and activates NLRP1 inflammasome. (Microbial infection) Cleaved between Gln-333 and Gly-334 by the 3C-like proteinase nsp5 from human coronavirus SARS-CoV-2. This cleavage liberates the activating C-terminal fragment and activates NLRP1 inflammasome, leading to downstream activation of GSDME and lung epithelial cell death. As to expression, widely expressed. Abundantly expressed in primary immune cells (isoform 1 and isoform 2), including in neutrophils, monocytes/macrophages, dendritic cells (mostly Langerhans cells), and B- and T-lymphocytes (at protein level). Strongly expressed in epithelial cells lining the glandular epithelium, such as that of the gastrointestinal tract (stomach, small intestine, colon), the respiratory tract (trachea and bronchi), and the endometrial and endocervical glands, gallbladder, prostate, and breast (at protein level). In testis, expressed in spermatogonia and primary spermatocytes, but not in Sertoli cells (at protein level). In the brain, expressed in neurons, in particular in pyramidal ones and in oligodendrocytes, but not detected in microglia (at protein level). Expressed in adult and fetal ocular tissues, including in adult and 24-week old fetal choroid, sclera, cornea, and optic nerve, as well as in adult retina and fetal retina/retinal pigment epithelium. Highly expressed in the skin throughout the epidermis and in dermal fibroblasts, in both glabrous skin and plantar skin. It is detected in keratinocytes, but not in melanocytes. Expressed in epidermal appendages such as hair follicles.

It is found in the cytoplasm. The protein resides in the cytosol. Its subcellular location is the nucleus. The protein localises to the inflammasome. It catalyses the reaction ATP + H2O = ADP + phosphate + H(+). Its activity is regulated as follows. NLRP1 inflammasome is activated by cleavage by the Protease 3C from various human enteroviruses and rhinoviruses (EV68, EV71, Coxsackievirus B3, HRV-14 and HRV-16): cleavage promotes ubiquitination and degradation of the N-terminal part, releasing the cleaved C-terminal part of the protein (NACHT, LRR and PYD domains-containing protein 1, C-terminus), which polymerizes and forms the NLRP1 inflammasome. Activated double-stranded RNA: positive-strand RNA viruses such as Semliki forest virus and long dsRNA activate the NLRP1 inflammasome. In contrast to its mouse ortholog, not activated by Bacillus anthracis lethal toxin. NLRP1 inflammasome is inhibited by DPP8 and DPP9, which sequester the C-terminal fragment of NLRP1 (NACHT, LRR and PYD domains-containing protein 1, C-terminus) in a ternary complex, thereby preventing NLRP1 oligomerization and activation. NLRP1 inflammasome is activated by Val-boroPro (Talabostat, PT-100), an inhibitor of dipeptidyl peptidases DPP8 and DPP9. Val-boroPro relieves inhibition of DPP8 and/or DPP9 by promoting disruption of the ternary complex, releasing its C-terminal part from autoinhibition. ATPase activity is activated by dsRNA-binding but not dsDNA-binding. (Microbial infection) The NLRP1 inflammasome is activated by human herpes virus 8/HHV-8 protein ORF45, which interacts with the N-terminal part of NLRP1 and promotes its translocation into the nucleus, relieving autoinhibition and leading to activation. With respect to regulation, (Microbial infection) NLRP1 inflammasome is activated by cleavage by the 3C-like proteinase nsp5 from human coronavirus SARS-CoV-2. Its function is as follows. Acts as the sensor component of the NLRP1 inflammasome, which mediates inflammasome activation in response to various pathogen-associated signals, leading to subsequent pyroptosis. Inflammasomes are supramolecular complexes that assemble in the cytosol in response to pathogens and other damage-associated signals and play critical roles in innate immunity and inflammation. Acts as a recognition receptor (PRR): recognizes specific pathogens and other damage-associated signals, such as cleavage by some human enteroviruses and rhinoviruses, double-stranded RNA, UV-B irradiation, or Val-boroPro inhibitor, and mediates the formation of the inflammasome polymeric complex composed of NLRP1, CASP1 and PYCARD/ASC. In response to pathogen-associated signals, the N-terminal part of NLRP1 is degraded by the proteasome, releasing the cleaved C-terminal part of the protein (NACHT, LRR and PYD domains-containing protein 1, C-terminus), which polymerizes and associates with PYCARD/ASC to initiate the formation of the inflammasome complex: the NLRP1 inflammasome recruits pro-caspase-1 (proCASP1) and promotes caspase-1 (CASP1) activation, which subsequently cleaves and activates inflammatory cytokines IL1B and IL18 and gasdermin-D (GSDMD), leading to pyroptosis. In the absence of GSDMD expression, the NLRP1 inflammasome is able to recruit and activate CASP8, leading to activation of gasdermin-E (GSDME). Activation of NLRP1 inflammasome is also required for HMGB1 secretion; the active cytokines and HMGB1 stimulate inflammatory responses. Binds ATP and shows ATPase activity. Plays an important role in antiviral immunity and inflammation in the human airway epithelium. Specifically recognizes a number of pathogen-associated signals: upon infection by human rhinoviruses 14 and 16 (HRV-14 and HRV-16), NLRP1 is cleaved and activated which triggers NLRP1-dependent inflammasome activation and IL18 secretion. Positive-strand RNA viruses, such as Semliki forest virus and long dsRNA activate the NLRP1 inflammasome, triggering IL1B release in a NLRP1-dependent fashion. Acts as a direct sensor for long dsRNA and thus RNA virus infection. May also be activated by muramyl dipeptide (MDP), a fragment of bacterial peptidoglycan, in a NOD2-dependent manner. The NLRP1 inflammasome is also activated in response to UV-B irradiation causing ribosome collisions: ribosome collisions cause phosphorylation and activation of NLRP1 in a MAP3K20-dependent manner, leading to pyroptosis. Constitutes the precursor of the NLRP1 inflammasome, which mediates autoproteolytic processing within the FIIND domain to generate the N-terminal and C-terminal parts, which are associated non-covalently in absence of pathogens and other damage-associated signals. Functionally, regulatory part that prevents formation of the NLRP1 inflammasome: in absence of pathogens and other damage-associated signals, interacts with the C-terminal part of NLRP1 (NACHT, LRR and PYD domains-containing protein 1, C-terminus), preventing activation of the NLRP1 inflammasome. In response to pathogen-associated signals, this part is ubiquitinated and degraded by the proteasome, releasing the cleaved C-terminal part of the protein, which polymerizes and forms the NLRP1 inflammasome. In terms of biological role, constitutes the active part of the NLRP1 inflammasome. In absence of pathogens and other damage-associated signals, interacts with the N-terminal part of NLRP1 (NACHT, LRR and PYD domains-containing protein 1, N-terminus), preventing activation of the NLRP1 inflammasome. In response to pathogen-associated signals, the N-terminal part of NLRP1 is degraded by the proteasome, releasing this form, which polymerizes and associates with PYCARD/ASC to form of the NLRP1 inflammasome complex: the NLRP1 inflammasome complex then directly recruits pro-caspase-1 (proCASP1) and promotes caspase-1 (CASP1) activation, leading to gasdermin-D (GSDMD) cleavage and subsequent pyroptosis. Its function is as follows. It is unclear whether is involved in inflammasome formation. It is not cleaved within the FIIND domain, does not assemble into specks, nor promote IL1B release. However, in an vitro cell-free system, it has been shown to be activated by MDP. This chain is NACHT, LRR and PYD domains-containing protein 1, found in Homo sapiens (Human).